The sequence spans 20 residues: Venom prothrombin activator notanarin-D (20 aa).

Residues 1–10 (SNSLFEEVRP) form the Gla domain. Residues glutamate 6 and glutamate 7 each carry the 4-carboxyglutamate modification. The Peptidase S1 domain maps to 11-20 (IVNGMDCKLG).

Belongs to the peptidase S1 family. Snake venom subfamily. In terms of assembly, heterodimer of a light chain and a heavy chain; disulfide-linked. Post-translationally, gamma-carboxyglutamate residues are formed by vitamin K dependent carboxylation. These residues are essential for the binding of calcium. Expressed by the venom gland.

It is found in the secreted. It catalyses the reaction Selective cleavage of Arg-|-Thr and then Arg-|-Ile bonds in prothrombin to form thrombin.. Its function is as follows. Snake prothrombin activator that attacks the hemostatic system of prey. This protein is functionally similar to blood coagulation factor Xa. In Notechis scutatus niger (Peninsula tiger snake), this protein is Venom prothrombin activator notanarin-D.